The following is a 182-amino-acid chain: Crossover junction endodeoxyribonuclease RuvC (182 aa).

Residues D7, E69, and D141 contribute to the active site. Mg(2+) contacts are provided by D7, E69, and D141.

Belongs to the RuvC family. In terms of assembly, homodimer which binds Holliday junction (HJ) DNA. The HJ becomes 2-fold symmetrical on binding to RuvC with unstacked arms; it has a different conformation from HJ DNA in complex with RuvA. In the full resolvosome a probable DNA-RuvA(4)-RuvB(12)-RuvC(2) complex forms which resolves the HJ. Mg(2+) serves as cofactor.

Its subcellular location is the cytoplasm. It catalyses the reaction Endonucleolytic cleavage at a junction such as a reciprocal single-stranded crossover between two homologous DNA duplexes (Holliday junction).. Its function is as follows. The RuvA-RuvB-RuvC complex processes Holliday junction (HJ) DNA during genetic recombination and DNA repair. Endonuclease that resolves HJ intermediates. Cleaves cruciform DNA by making single-stranded nicks across the HJ at symmetrical positions within the homologous arms, yielding a 5'-phosphate and a 3'-hydroxyl group; requires a central core of homology in the junction. The consensus cleavage sequence is 5'-(A/T)TT(C/G)-3'. Cleavage occurs on the 3'-side of the TT dinucleotide at the point of strand exchange. HJ branch migration catalyzed by RuvA-RuvB allows RuvC to scan DNA until it finds its consensus sequence, where it cleaves and resolves the cruciform DNA. This is Crossover junction endodeoxyribonuclease RuvC from Variovorax paradoxus (strain S110).